Here is a 212-residue protein sequence, read N- to C-terminus: Large ribosomal subunit protein uL4 (212 aa).

The span at 43–52 (NNRQGTASTK) shows a compositional bias: polar residues. The tract at residues 43–77 (NNRQGTASTKTRSEVRGGGRKPWRQKGTGRARAGS) is disordered. Basic residues predominate over residues 60-71 (GGRKPWRQKGTG).

The protein belongs to the universal ribosomal protein uL4 family. As to quaternary structure, part of the 50S ribosomal subunit.

Its function is as follows. One of the primary rRNA binding proteins, this protein initially binds near the 5'-end of the 23S rRNA. It is important during the early stages of 50S assembly. It makes multiple contacts with different domains of the 23S rRNA in the assembled 50S subunit and ribosome. Forms part of the polypeptide exit tunnel. This Trichodesmium erythraeum (strain IMS101) protein is Large ribosomal subunit protein uL4.